Here is an 886-residue protein sequence, read N- to C-terminus: Alanine--tRNA ligase (886 aa).

Positions 564, 568, 666, and 670 each coordinate Zn(2+).

The protein belongs to the class-II aminoacyl-tRNA synthetase family. Requires Zn(2+) as cofactor.

The protein resides in the cytoplasm. It catalyses the reaction tRNA(Ala) + L-alanine + ATP = L-alanyl-tRNA(Ala) + AMP + diphosphate. In terms of biological role, catalyzes the attachment of alanine to tRNA(Ala) in a two-step reaction: alanine is first activated by ATP to form Ala-AMP and then transferred to the acceptor end of tRNA(Ala). Also edits incorrectly charged Ser-tRNA(Ala) and Gly-tRNA(Ala) via its editing domain. This is Alanine--tRNA ligase from Prochlorococcus marinus subsp. pastoris (strain CCMP1986 / NIES-2087 / MED4).